Consider the following 185-residue polypeptide: Peptidyl-tRNA hydrolase (185 aa).

Tyr14 serves as a coordination point for tRNA. His19 (proton acceptor) is an active-site residue. TRNA is bound by residues Phe64, Asn66, and Asn112.

This sequence belongs to the PTH family. In terms of assembly, monomer.

The protein localises to the cytoplasm. It catalyses the reaction an N-acyl-L-alpha-aminoacyl-tRNA + H2O = an N-acyl-L-amino acid + a tRNA + H(+). Its function is as follows. Hydrolyzes ribosome-free peptidyl-tRNAs (with 1 or more amino acids incorporated), which drop off the ribosome during protein synthesis, or as a result of ribosome stalling. Catalyzes the release of premature peptidyl moieties from peptidyl-tRNA molecules trapped in stalled 50S ribosomal subunits, and thus maintains levels of free tRNAs and 50S ribosomes. This is Peptidyl-tRNA hydrolase from Alkaliphilus metalliredigens (strain QYMF).